We begin with the raw amino-acid sequence, 227 residues long: PKHD-type hydroxylase Bcep18194_B0892 (227 aa).

Positions K78–S178 constitute a Fe2OG dioxygenase domain. Residues H96, D98, and H159 each coordinate Fe cation. 2-oxoglutarate is bound at residue R169.

The cofactor is Fe(2+). It depends on L-ascorbate as a cofactor.

The chain is PKHD-type hydroxylase Bcep18194_B0892 from Burkholderia lata (strain ATCC 17760 / DSM 23089 / LMG 22485 / NCIMB 9086 / R18194 / 383).